The chain runs to 231 residues: MVFLSLKYALSGLAATAAAVPHANRNTCDNSSLNTTATTYTTTSEDTIFTVARKFDRGPCDIARYNRMIDAEHIFANFTLRIPPQVCNPDSTTCFLTRQNATATCLKGGPHDYRTIAGDTIEKIALYKLNMTVESVYENAKMGVSSIHEELPVNTFLKIPQCVPSVCHVTPFHFTYGVYKDIAEMFDTTVGQIMAFNGGYNYSESASDADAAWITVPTGCTNLALNVTEEI.

The N-terminal stretch at 1–19 (MVFLSLKYALSGLAATAAA) is a signal peptide. 7 N-linked (GlcNAc...) asparagine glycosylation sites follow: Asn-30, Asn-34, Asn-77, Asn-100, Asn-130, Asn-201, and Asn-226. One can recognise a LysM domain in the interval 38 to 82 (TTYTTTSEDTIFTVARKFDRGPCDIARYNRMIDAEHIFANFTLRI).

Belongs to the secreted LysM effector family.

It localises to the secreted. Its function is as follows. Secreted LysM effector that might have a role in sequestration of chitin oligosaccharides (breakdown products of fungal cell walls that are released during invasion and act as triggers of host immunity) to dampen host defense. This chain is Secreted LysM effector LysM13, found in Penicillium expansum (Blue mold rot fungus).